The following is an 84-amino-acid chain: Small ribosomal subunit protein bS16 (84 aa).

The protein belongs to the bacterial ribosomal protein bS16 family.

The protein is Small ribosomal subunit protein bS16 of Burkholderia mallei (strain NCTC 10247).